A 231-amino-acid polypeptide reads, in one-letter code: ATP-dependent dethiobiotin synthetase BioD (231 aa).

An ATP-binding site is contributed by 12–17 (EVGKTV). T16 provides a ligand contact to Mg(2+). Residue K37 is part of the active site. Position 41 (S41) interacts with substrate. Residues D51, 112-115 (EGAG), and 202-204 (PKL) contribute to the ATP site. Mg(2+)-binding residues include D51 and E112.

It belongs to the dethiobiotin synthetase family. Homodimer. Mg(2+) is required as a cofactor.

It is found in the cytoplasm. It catalyses the reaction (7R,8S)-7,8-diammoniononanoate + CO2 + ATP = (4R,5S)-dethiobiotin + ADP + phosphate + 3 H(+). Its pathway is cofactor biosynthesis; biotin biosynthesis; biotin from 7,8-diaminononanoate: step 1/2. Catalyzes a mechanistically unusual reaction, the ATP-dependent insertion of CO2 between the N7 and N8 nitrogen atoms of 7,8-diaminopelargonic acid (DAPA, also called 7,8-diammoniononanoate) to form a ureido ring. The protein is ATP-dependent dethiobiotin synthetase BioD of Bacillus subtilis subsp. natto.